A 213-amino-acid polypeptide reads, in one-letter code: Orotate phosphoribosyltransferase (213 aa).

K26 contacts 5-phospho-alpha-D-ribose 1-diphosphate. 34–35 (FF) provides a ligand contact to orotate. 5-phospho-alpha-D-ribose 1-diphosphate is bound by residues 72–73 (YK), R99, K100, K103, H105, and 124–132 (DDVITAGTA). Residues T128 and R156 each coordinate orotate.

This sequence belongs to the purine/pyrimidine phosphoribosyltransferase family. PyrE subfamily. In terms of assembly, homodimer. It depends on Mg(2+) as a cofactor.

It carries out the reaction orotidine 5'-phosphate + diphosphate = orotate + 5-phospho-alpha-D-ribose 1-diphosphate. It functions in the pathway pyrimidine metabolism; UMP biosynthesis via de novo pathway; UMP from orotate: step 1/2. Catalyzes the transfer of a ribosyl phosphate group from 5-phosphoribose 1-diphosphate to orotate, leading to the formation of orotidine monophosphate (OMP). The chain is Orotate phosphoribosyltransferase from Pseudomonas aeruginosa (strain UCBPP-PA14).